A 386-amino-acid chain; its full sequence is Queuine tRNA-ribosyltransferase (386 aa).

Asp-99 (proton acceptor) is an active-site residue. Substrate is bound by residues Asp-99–Phe-103, Asp-153, Gln-198, and Gly-225. An RNA binding region spans residues Gly-256–Asp-262. The Nucleophile role is filled by Asp-275. An RNA binding; important for wobble base 34 recognition region spans residues Thr-280–Arg-284. Cys-313, Cys-315, Cys-318, and His-344 together coordinate Zn(2+).

The protein belongs to the queuine tRNA-ribosyltransferase family. As to quaternary structure, homodimer. Within each dimer, one monomer is responsible for RNA recognition and catalysis, while the other monomer binds to the replacement base PreQ1. Requires Zn(2+) as cofactor.

The catalysed reaction is 7-aminomethyl-7-carbaguanine + guanosine(34) in tRNA = 7-aminomethyl-7-carbaguanosine(34) in tRNA + guanine. It functions in the pathway tRNA modification; tRNA-queuosine biosynthesis. In terms of biological role, catalyzes the base-exchange of a guanine (G) residue with the queuine precursor 7-aminomethyl-7-deazaguanine (PreQ1) at position 34 (anticodon wobble position) in tRNAs with GU(N) anticodons (tRNA-Asp, -Asn, -His and -Tyr). Catalysis occurs through a double-displacement mechanism. The nucleophile active site attacks the C1' of nucleotide 34 to detach the guanine base from the RNA, forming a covalent enzyme-RNA intermediate. The proton acceptor active site deprotonates the incoming PreQ1, allowing a nucleophilic attack on the C1' of the ribose to form the product. After dissociation, two additional enzymatic reactions on the tRNA convert PreQ1 to queuine (Q), resulting in the hypermodified nucleoside queuosine (7-(((4,5-cis-dihydroxy-2-cyclopenten-1-yl)amino)methyl)-7-deazaguanosine). The chain is Queuine tRNA-ribosyltransferase from Acinetobacter baylyi (strain ATCC 33305 / BD413 / ADP1).